The sequence spans 314 residues: Protein phosphatase PTC7 homolog fig (314 aa).

Residues 43-309 (PYLVTVVQGR…DDITLILSSV (267 aa)) form the PPM-type phosphatase domain. Mn(2+) is bound by residues Asp-87, Gly-88, and Asp-232.

This sequence belongs to the PP2C family. Mg(2+) serves as cofactor. Mn(2+) is required as a cofactor.

The catalysed reaction is O-phospho-L-seryl-[protein] + H2O = L-seryl-[protein] + phosphate. The enzyme catalyses O-phospho-L-threonyl-[protein] + H2O = L-threonyl-[protein] + phosphate. This is Protein phosphatase PTC7 homolog fig from Drosophila sechellia (Fruit fly).